We begin with the raw amino-acid sequence, 78 residues long: Alpha-neurotoxin homolog 1 (78 aa).

A signal peptide spans 1 to 21; sequence MKTLLLTLVVVTIVCLDFGYT. Disulfide bonds link Cys24/Cys42, Cys37/Cys57, Cys59/Cys70, and Cys71/Cys76.

Belongs to the three-finger toxin family. Short-chain subfamily. Orphan group XII sub-subfamily. As to expression, expressed by the venom gland.

It is found in the secreted. The protein is Alpha-neurotoxin homolog 1 of Micrurus corallinus (Brazilian coral snake).